We begin with the raw amino-acid sequence, 205 residues long: Holliday junction branch migration complex subunit RuvA (205 aa).

Positions 1-64 are domain I; the sequence is MIGRLRGVLV…EDAQLLYGFI (64 aa). The tract at residues 65–143 is domain II; the sequence is TKQERALFRL…SLMEASAGSE (79 aa). Residues 144-156 are flexible linker; that stretch reads REFVLQSNYSPAP. The domain III stretch occupies residues 157–205; that stretch reads TVNSAEEDAISALISLGYKPPQASKSVSAAYKEGMDSETLIKAALKSML.

This sequence belongs to the RuvA family. In terms of assembly, homotetramer. Forms an RuvA(8)-RuvB(12)-Holliday junction (HJ) complex. HJ DNA is sandwiched between 2 RuvA tetramers; dsDNA enters through RuvA and exits via RuvB. An RuvB hexamer assembles on each DNA strand where it exits the tetramer. Each RuvB hexamer is contacted by two RuvA subunits (via domain III) on 2 adjacent RuvB subunits; this complex drives branch migration. In the full resolvosome a probable DNA-RuvA(4)-RuvB(12)-RuvC(2) complex forms which resolves the HJ.

It is found in the cytoplasm. The RuvA-RuvB-RuvC complex processes Holliday junction (HJ) DNA during genetic recombination and DNA repair, while the RuvA-RuvB complex plays an important role in the rescue of blocked DNA replication forks via replication fork reversal (RFR). RuvA specifically binds to HJ cruciform DNA, conferring on it an open structure. The RuvB hexamer acts as an ATP-dependent pump, pulling dsDNA into and through the RuvAB complex. HJ branch migration allows RuvC to scan DNA until it finds its consensus sequence, where it cleaves and resolves the cruciform DNA. This Shewanella baltica (strain OS223) protein is Holliday junction branch migration complex subunit RuvA.